Consider the following 121-residue polypeptide: Type II secretion system protein I (121 aa).

Positions 1–6 are cleaved as a propeptide — leader sequence; the sequence is MRRQKG. An N-methylmethionine modification is found at methionine 7. Residues 7–27 form a helical membrane-spanning segment; that stretch reads MTLVEVLVALSVFALAGIAVL.

Belongs to the GSP I family. In terms of assembly, type II secretion is composed of four main components: the outer membrane complex, the inner membrane complex, the cytoplasmic secretion ATPase and the periplasm-spanning pseudopilus. Interacts with core component OutG. Cleaved by prepilin peptidase. In terms of processing, methylated by prepilin peptidase at the amino group of the N-terminal methionine once the leader sequence is cleaved by prepilin peptidase.

It is found in the cell inner membrane. Functionally, component of the type II secretion system required for the energy-dependent secretion of extracellular factors such as proteases and toxins from the periplasm. Part of the pseudopilus tip complex that is critical for the recognition and binding of secretion substrates. The polypeptide is Type II secretion system protein I (outI) (Pectobacterium carotovorum subsp. carotovorum (Erwinia carotovora subsp. carotovora)).